The chain runs to 446 residues: Ribosomal protein uS12 methylthiotransferase RimO (446 aa).

Residues 9-121 enclose the MTTase N-terminal domain; it reads PKVGFVSLGC…VLDAIHAALP (113 aa). [4Fe-4S] cluster-binding residues include cysteine 18, cysteine 54, cysteine 83, cysteine 152, cysteine 156, and cysteine 159. Positions 138-375 constitute a Radical SAM core domain; it reads LTPPHYAYLK…MAVQEAISRQ (238 aa). Positions 378-445 constitute a TRAM domain; it reads QRRVGQRQRV…AHDLYGMVVS (68 aa).

It belongs to the methylthiotransferase family. RimO subfamily. It depends on [4Fe-4S] cluster as a cofactor.

Its subcellular location is the cytoplasm. The enzyme catalyses L-aspartate(89)-[ribosomal protein uS12]-hydrogen + (sulfur carrier)-SH + AH2 + 2 S-adenosyl-L-methionine = 3-methylsulfanyl-L-aspartate(89)-[ribosomal protein uS12]-hydrogen + (sulfur carrier)-H + 5'-deoxyadenosine + L-methionine + A + S-adenosyl-L-homocysteine + 2 H(+). Functionally, catalyzes the methylthiolation of an aspartic acid residue of ribosomal protein uS12. The chain is Ribosomal protein uS12 methylthiotransferase RimO from Acidithiobacillus ferrooxidans (strain ATCC 23270 / DSM 14882 / CIP 104768 / NCIMB 8455) (Ferrobacillus ferrooxidans (strain ATCC 23270)).